The chain runs to 103 residues: Large ribosomal subunit protein bL21 (103 aa).

The protein belongs to the bacterial ribosomal protein bL21 family. As to quaternary structure, part of the 50S ribosomal subunit. Contacts protein L20.

Functionally, this protein binds to 23S rRNA in the presence of protein L20. The polypeptide is Large ribosomal subunit protein bL21 (Acidovorax sp. (strain JS42)).